A 72-amino-acid chain; its full sequence is Large ribosomal subunit protein uL29 (72 aa).

Belongs to the universal ribosomal protein uL29 family.

In Chlamydia trachomatis serovar L2 (strain ATCC VR-902B / DSM 19102 / 434/Bu), this protein is Large ribosomal subunit protein uL29.